Consider the following 102-residue polypeptide: 10 kDa heat shock protein, mitochondrial (102 aa).

At Ala2 the chain carries N-acetylalanine. Lys8 is subject to N6-acetyllysine. The residue at position 28 (Lys28) is an N6-succinyllysine. Lys40 is subject to N6-acetyllysine; alternate. Residues Lys40, Lys54, and Lys56 each carry the N6-malonyllysine; alternate modification. 5 positions are modified to N6-succinyllysine; alternate: Lys40, Lys54, Lys56, Lys66, and Lys70. An N6-acetyllysine; alternate mark is found at Lys56, Lys66, and Lys70. Thr79 carries the post-translational modification Phosphothreonine. Residues Lys80 and Lys86 each carry the N6-acetyllysine; alternate modification. Residues Lys80 and Lys86 each carry the N6-succinyllysine; alternate modification. At Lys99 the chain carries N6-acetyllysine.

This sequence belongs to the GroES chaperonin family. As to quaternary structure, homoheptamer arranged in a ring structure. 2 heptameric Hsp10 rings interact with a Hsp60 tetradecamer in the structure of a back-to-back double heptameric ring to form the symmetrical football complex.

The protein localises to the mitochondrion matrix. In terms of biological role, co-chaperonin implicated in mitochondrial protein import and macromolecular assembly. Together with Hsp60, facilitates the correct folding of imported proteins. May also prevent misfolding and promote the refolding and proper assembly of unfolded polypeptides generated under stress conditions in the mitochondrial matrix. The functional units of these chaperonins consist of heptameric rings of the large subunit Hsp60, which function as a back-to-back double ring. In a cyclic reaction, Hsp60 ring complexes bind one unfolded substrate protein per ring, followed by the binding of ATP and association with 2 heptameric rings of the co-chaperonin Hsp10. This leads to sequestration of the substrate protein in the inner cavity of Hsp60 where, for a certain period of time, it can fold undisturbed by other cell components. Synchronous hydrolysis of ATP in all Hsp60 subunits results in the dissociation of the chaperonin rings and the release of ADP and the folded substrate protein. This chain is 10 kDa heat shock protein, mitochondrial (HSPE1), found in Bos taurus (Bovine).